We begin with the raw amino-acid sequence, 151 residues long: Large ribosomal subunit protein eL8 (151 aa).

It belongs to the eukaryotic ribosomal protein eL8 family. As to quaternary structure, part of the 50S ribosomal subunit. Probably part of the RNase P complex.

It localises to the cytoplasm. Its function is as follows. Multifunctional RNA-binding protein that recognizes the K-turn motif in ribosomal RNA, the RNA component of RNase P, box H/ACA, box C/D and box C'/D' sRNAs. The chain is Large ribosomal subunit protein eL8 from Pyrobaculum neutrophilum (strain DSM 2338 / JCM 9278 / NBRC 100436 / V24Sta) (Thermoproteus neutrophilus).